The following is a 281-amino-acid chain: MVQIQFHQGEPLGHKKEKPPPVSPPSPPPIRRVTVITKDEDTLRSVQHFLWMVRLYGTVVFQTSATIATTILFMLIPWRVTTPYLRDTLPFWSTLLPCALRCHAYWLERQRRPGTLMLVMVYTTLTTISVSTIGLCFDRTVVIQAYVLSSMLCVWCTGLAWLMAWNMQRRLAILCLLSFMLPILWLFIAVQSWEPYQRIILALTVSFIYGLKIVLIRDTLTVLYRSPSNCYTDGDLLRTAMLLYMDQVIMFLLVVVPLTAPIWYPNYAGALGRTAHWLFHK.

The interval Met-1–Ile-30 is disordered. Residues Pro-20–Ile-30 show a composition bias toward pro residues. The next 7 helical transmembrane spans lie at Thr-58–Trp-78, Thr-88–Leu-107, Met-117–Phe-137, Ala-145–Trp-165, Leu-171–Gln-191, Tyr-196–Ile-216, and Val-248–Ala-268.

This sequence belongs to the cytomegalovirus US12 family.

It is found in the host membrane. This is an uncharacterized protein from Homo sapiens (Human).